Reading from the N-terminus, the 121-residue chain is Small ribosomal subunit protein uS13 (121 aa).

A disordered region spans residues His91 to Lys121. The segment covering Ala106–Lys121 has biased composition (basic residues).

It belongs to the universal ribosomal protein uS13 family. In terms of assembly, part of the 30S ribosomal subunit. Forms a loose heterodimer with protein S19. Forms two bridges to the 50S subunit in the 70S ribosome.

Its function is as follows. Located at the top of the head of the 30S subunit, it contacts several helices of the 16S rRNA. In the 70S ribosome it contacts the 23S rRNA (bridge B1a) and protein L5 of the 50S subunit (bridge B1b), connecting the 2 subunits; these bridges are implicated in subunit movement. Contacts the tRNAs in the A and P-sites. The protein is Small ribosomal subunit protein uS13 of Listeria welshimeri serovar 6b (strain ATCC 35897 / DSM 20650 / CCUG 15529 / CIP 8149 / NCTC 11857 / SLCC 5334 / V8).